A 439-amino-acid chain; its full sequence is UDP-N-acetylglucosamine--peptide N-acetylglucosaminyltransferase stabilizing protein GtfB (439 aa).

This sequence belongs to the GtfB family. In terms of assembly, interacts with glycosyltransferase GtfA (Gtf2); probably forms a heterotetramer with 2 subunits each of GtfA and GtfB. Part of the accessory SecA2/SecY2 protein translocation apparatus.

It is found in the cell membrane. The protein operates within protein modification; protein glycosylation. In terms of biological role, required for the polymorphic O-glycosylation of the serine-rich repeat protein Fap1. A stabilizing protein that is part of the accessory SecA2/SecY2 system specifically required to export Fap1, a serine-rich fimbrial adhesin encoded upstream in the same operon. The GtfA-GtfB (Gtf1-Gtf2 in this bacteria) complex adds GlcNAc from UDP-GlcNAc to Fap1, attaching the first sugar residue. Cannot use not UDP-Glc as substrate. Stabilizes the glycosylation activity of GtfA, causing it to partially localize to the cellular membrane where it is more protease resistant. The chain is UDP-N-acetylglucosamine--peptide N-acetylglucosaminyltransferase stabilizing protein GtfB from Streptococcus parasanguinis.